The primary structure comprises 367 residues: Sulfate/thiosulfate import ATP-binding protein CysA 2 (367 aa).

The region spanning 3–237 (VRVQNIRKEF…PVSPFVYGFI (235 aa)) is the ABC transporter domain. An ATP-binding site is contributed by 35–42 (GPSGSGKT).

It belongs to the ABC transporter superfamily. Sulfate/tungstate importer (TC 3.A.1.6) family. The complex is composed of two ATP-binding proteins (CysA), two transmembrane proteins (CysT and CysW) and a solute-binding protein (CysP).

It is found in the cell inner membrane. It carries out the reaction sulfate(out) + ATP + H2O = sulfate(in) + ADP + phosphate + H(+). The enzyme catalyses thiosulfate(out) + ATP + H2O = thiosulfate(in) + ADP + phosphate + H(+). In terms of biological role, part of the ABC transporter complex CysAWTP involved in sulfate/thiosulfate import. Responsible for energy coupling to the transport system. This Rhizobium meliloti (strain 1021) (Ensifer meliloti) protein is Sulfate/thiosulfate import ATP-binding protein CysA 2.